A 996-amino-acid polypeptide reads, in one-letter code: GPI ethanolamine phosphate transferase 1 (996 aa).

Topologically, residues 1–8 are cytoplasmic; it reads MAAFPRFR. Residues 9–29 form a helical membrane-spanning segment; sequence FLAIAVIFHFAYIFSIFDIYF. Residues 30-463 are Lumenal-facing; that stretch reads VSPIETGMRL…LQTYDWLFLR (434 aa). 3 N-linked (GlcNAc...) asparagine glycosylation sites follow: asparagine 47, asparagine 147, and asparagine 210. A helical membrane pass occupies residues 464–484; sequence ALITIGYLGWIAYALTTVVDL. Topologically, residues 485-495 are cytoplasmic; the sequence is HVLHGRVRPSR. Residues 496 to 516 traverse the membrane as a helical segment; the sequence is TLGGGLFFTSVLVALYASLVI. The Lumenal segment spans residues 517-518; sequence SK. Residues 519–539 form a helical membrane-spanning segment; the sequence is SPLTYYVYAFFPVFFWEEVYA. The Cytoplasmic portion of the chain corresponds to 540 to 560; sequence HRESLAAGRKELLGHINSGGS. A helical transmembrane segment spans residues 561 to 581; sequence VASFVLNSALYVGVIESLALG. Residues 582-586 lie on the Lumenal side of the membrane; sequence YIHRE. A helical transmembrane segment spans residues 587–607; the sequence is ILSVLFVLGSFWPFTHGLSFL. Over 608–612 the chain is Cytoplasmic; that stretch reads KKHGA. Residues 613–633 form a helical membrane-spanning segment; the sequence is LSATWFLACIAMSTFTLLPAM. Topologically, residues 634–637 are lumenal; it reads KAEN. A helical membrane pass occupies residues 638–658; sequence VNLITIGGVLMVVIGLLYLIF. Over 659-681 the chain is Cytoplasmic; it reads EDFVLADFSWNAKPTSRNHLSRS. A helical membrane pass occupies residues 682–702; that stretch reads LVGIQVGLTVLSIIITRSSAL. Residues 703–715 lie on the Lumenal side of the membrane; that stretch reads SLQAKQGLPRGNQ. The helical transmembrane segment at 716-734 threads the bilayer; sequence IMGWVTLVASLLMPLAYRL. Over 735-754 the chain is Cytoplasmic; it reads RPNNHYMHRILVIFLTCAPT. Residues 755–775 form a helical membrane-spanning segment; the sequence is FVILTISYEGLFYLVFSALLV. Residues 776-822 are Lumenal-facing; sequence SWVRLEHAVQKFTSSKAPQTAATKKPTTTTESHLPAPFRPLTLHDAR. The chain crosses the membrane as a helical span at residues 823 to 843; the sequence is VALFFFILLQSAFFSTGNVAS. At 844 to 865 the chain is on the cytoplasmic side; the sequence is VSSFSLDSVYRLIPIFDPFSQG. Residues 866-886 traverse the membrane as a helical segment; that stretch reads AMLILKLMIPFALISANLGIL. The Lumenal segment spans residues 887-895; the sequence is NKRLGVAPS. A helical transmembrane segment spans residues 896–916; sequence ALFMVVMGISDILTLYFFWVV. At 917-932 the chain is on the cytoplasmic side; that stretch reads KDEGSWLEIGSTISHF. Residues 933-953 form a helical membrane-spanning segment; that stretch reads VIASLLCVFVSALEPVSAAFI. Residues 954–996 are Lumenal-facing; it reads AGVEVGEESELKEEGKVAEKVVEKVNEAVEGLVSGGDGGGDES.

The protein belongs to the PIGG/PIGN/PIGO family. PIGN subfamily.

It localises to the endoplasmic reticulum membrane. It functions in the pathway glycolipid biosynthesis; glycosylphosphatidylinositol-anchor biosynthesis. In terms of biological role, ethanolamine phosphate transferase involved in glycosylphosphatidylinositol-anchor biosynthesis. Transfers ethanolamine phosphate to the first alpha-1,4-linked mannose of the glycosylphosphatidylinositol precursor of GPI-anchor. This chain is GPI ethanolamine phosphate transferase 1 (mcd-4), found in Neurospora crassa (strain ATCC 24698 / 74-OR23-1A / CBS 708.71 / DSM 1257 / FGSC 987).